Consider the following 194-residue polypeptide: MSEIKLIVGLGNPGDKYADTRHNAGEWLIDRLSRRFNFTLKDEAKFFGKTARTVIDGHEIRFLVPATFMNLSGKAIGALASFYRIRPEEILLAHDELDLPPGTVKIKQGGGHGGHNGLKDTIAQLGNNKNFYRLRIGIGHPGDRNLVTSYVLGKPSPADWALIDKALDEAVVCVEILLKDGITKATNRLNGFKA.

Tyrosine 17 serves as a coordination point for tRNA. Residue histidine 22 is the Proton acceptor of the active site. TRNA contacts are provided by phenylalanine 68, asparagine 70, and asparagine 116.

The protein belongs to the PTH family. In terms of assembly, monomer.

It localises to the cytoplasm. It carries out the reaction an N-acyl-L-alpha-aminoacyl-tRNA + H2O = an N-acyl-L-amino acid + a tRNA + H(+). Its function is as follows. Hydrolyzes ribosome-free peptidyl-tRNAs (with 1 or more amino acids incorporated), which drop off the ribosome during protein synthesis, or as a result of ribosome stalling. Catalyzes the release of premature peptidyl moieties from peptidyl-tRNA molecules trapped in stalled 50S ribosomal subunits, and thus maintains levels of free tRNAs and 50S ribosomes. In Actinobacillus succinogenes (strain ATCC 55618 / DSM 22257 / CCUG 43843 / 130Z), this protein is Peptidyl-tRNA hydrolase.